A 418-amino-acid chain; its full sequence is Mitochondrial outer membrane protein SLC25A46 (418 aa).

Residues 1 to 30 (MHPRRPDGFDGLGYRGGARDEQGFGGAFPA) form a disordered region. The residue at position 32 (serine 32) is a Phosphoserine. The segment at 44-93 (TTPPDIPGSRNLHWGEKSPPYGVPTTSTPYEGPTEEPFSSGGGGSVQGQS) is disordered. Threonine 45 is subject to Phosphothreonine. Residues 96-187 (QLNRFAGFGI…GIISEFTPLP (92 aa)) form a Solcar 1 repeat. Helical transmembrane passes span 103 to 123 (FGIGLASLFTENVLAHPCIVL), 167 to 187 (FIVQGVTLGAEGIISEFTPLP), 202 to 222 (HLLLKSLTYVVAMPFYSASLI), 258 to 278 (LLPLLSLIFPTVLHGVLHYII), 314 to 334 (FPELIANFAASLCSDVILYPL), and 382 to 402 (VFGFYKGFGAVIIQYTLHAAV). Residues 311 to 413 (DAYFPELIAN…QITKIIYSTL (103 aa)) form a Solcar 2 repeat.

It belongs to the mitochondrial carrier (TC 2.A.29) family. As to quaternary structure, associates with the mitochondrial contact site and cristae organizing system (MICOS) complex. May associate with the endoplasmic reticulum membrane protein complex (EMC).

It localises to the mitochondrion outer membrane. In terms of biological role, transmembrane protein of the mitochondrial outer membrane that controls mitochondrial organization. May regulate the assembly of the MICOS (mitochondrial contact site and cristae organizing system) complex which is essential to the biogenesis and dynamics of mitochondrial cristae, the inwards folds of the inner mitochondrial membrane. Through its interaction with the EMC (endoplasmic reticulum membrane protein complex), could regulate mitochondrial lipid homeostasis and thereby mitochondrial fission. In Homo sapiens (Human), this protein is Mitochondrial outer membrane protein SLC25A46.